The sequence spans 263 residues: Acetylglutamate kinase (263 aa).

Substrate contacts are provided by residues 48–49 (GG), R70, and N162.

Belongs to the acetylglutamate kinase family. ArgB subfamily.

It is found in the cytoplasm. It catalyses the reaction N-acetyl-L-glutamate + ATP = N-acetyl-L-glutamyl 5-phosphate + ADP. It functions in the pathway amino-acid biosynthesis; L-arginine biosynthesis; N(2)-acetyl-L-ornithine from L-glutamate: step 2/4. Its function is as follows. Catalyzes the ATP-dependent phosphorylation of N-acetyl-L-glutamate. The protein is Acetylglutamate kinase of Vibrio vulnificus (strain YJ016).